The primary structure comprises 255 residues: Indole-3-glycerol phosphate synthase (255 aa).

The protein belongs to the TrpC family.

The enzyme catalyses 1-(2-carboxyphenylamino)-1-deoxy-D-ribulose 5-phosphate + H(+) = (1S,2R)-1-C-(indol-3-yl)glycerol 3-phosphate + CO2 + H2O. It functions in the pathway amino-acid biosynthesis; L-tryptophan biosynthesis; L-tryptophan from chorismate: step 4/5. The protein is Indole-3-glycerol phosphate synthase of Streptococcus thermophilus (strain CNRZ 1066).